A 441-amino-acid polypeptide reads, in one-letter code: Plasmepsin VI (441 aa).

The Cytoplasmic portion of the chain corresponds to 1–7; the sequence is MTNFCIK. Residues 8–28 traverse the membrane as a helical; Signal-anchor for type II membrane protein segment; it reads SYLFLYLSFLLFFDIITIFHV. Topologically, residues 29 to 441 are extracellular; that stretch reads SSIRISTVLK…VGVVKSNHNF (413 aa). In terms of domain architecture, Peptidase A1 spans 109–435; it reads FIGDIEIGNP…DNDHKLVGVV (327 aa). Residues Asp127 and Asp324 contribute to the active site.

This sequence belongs to the peptidase A1 family.

It localises to the membrane. Functionally, during the development in the mosquito midgut, plays a role in sporozoite egress from oocysts. The polypeptide is Plasmepsin VI (Plasmodium berghei (strain Anka)).